The following is a 104-amino-acid chain: L-rhamnose mutarotase (104 aa).

Residue Y18 coordinates substrate. Catalysis depends on H22, which acts as the Proton donor. Residues Y41 and 76 to 77 (WW) each bind substrate.

The protein belongs to the rhamnose mutarotase family. Homodimer.

The protein localises to the cytoplasm. The catalysed reaction is alpha-L-rhamnose = beta-L-rhamnose. It functions in the pathway carbohydrate metabolism; L-rhamnose metabolism. Its function is as follows. Involved in the anomeric conversion of L-rhamnose. The chain is L-rhamnose mutarotase from Escherichia coli O7:K1 (strain IAI39 / ExPEC).